The chain runs to 681 residues: Methionine--tRNA ligase (681 aa).

Positions 12–22 (PYANGSIHLGH) match the 'HIGH' region motif. Residues Cys-143, Cys-146, Cys-156, and Cys-159 each coordinate Zn(2+). The short motif at 327–331 (KMSKS) is the 'KMSKS' region element. Position 330 (Lys-330) interacts with ATP. A compositionally biased stretch (basic and acidic residues) spans 545–557 (FEKSNPEKAKQDP). The interval 545-566 (FEKSNPEKAKQDPSKSNTNEVK) is disordered. Residues 580–681 (ELSKVELRVG…RDASPGDLLK (102 aa)) enclose the tRNA-binding domain.

Belongs to the class-I aminoacyl-tRNA synthetase family. MetG type 1 subfamily. Homodimer. Requires Zn(2+) as cofactor.

The protein localises to the cytoplasm. It catalyses the reaction tRNA(Met) + L-methionine + ATP = L-methionyl-tRNA(Met) + AMP + diphosphate. Functionally, is required not only for elongation of protein synthesis but also for the initiation of all mRNA translation through initiator tRNA(fMet) aminoacylation. In Leptospira biflexa serovar Patoc (strain Patoc 1 / ATCC 23582 / Paris), this protein is Methionine--tRNA ligase.